We begin with the raw amino-acid sequence, 423 residues long: Maltoporin 1 (423 aa).

The signal sequence occupies residues 1 to 23 (MNTTLRALSVALAAALIAPSAFA).

This sequence belongs to the porin LamB (TC 1.B.3) family. In terms of assembly, homotrimer formed of three 18-stranded antiparallel beta-barrels, containing three independent channels.

The protein resides in the cell outer membrane. It catalyses the reaction beta-maltose(in) = beta-maltose(out). Its function is as follows. Involved in the transport of maltose and maltodextrins. The polypeptide is Maltoporin 1 (Klebsiella pneumoniae subsp. pneumoniae (strain ATCC 700721 / MGH 78578)).